The sequence spans 704 residues: Methionine--tRNA ligase (704 aa).

Residues 17 to 27 (PYANGPIHLGH) carry the 'HIGH' region motif. 4 residues coordinate Zn(2+): Cys-148, Cys-151, Cys-161, and Cys-164. Residues 348–352 (KMSKS) carry the 'KMSKS' region motif. Lys-351 contacts ATP. In terms of domain architecture, tRNA-binding spans 603-704 (ELSKVELRVG…KDAKPGDRLK (102 aa)).

The protein belongs to the class-I aminoacyl-tRNA synthetase family. MetG type 1 subfamily. Homodimer. It depends on Zn(2+) as a cofactor.

The protein resides in the cytoplasm. The catalysed reaction is tRNA(Met) + L-methionine + ATP = L-methionyl-tRNA(Met) + AMP + diphosphate. Is required not only for elongation of protein synthesis but also for the initiation of all mRNA translation through initiator tRNA(fMet) aminoacylation. The sequence is that of Methionine--tRNA ligase from Leptospira borgpetersenii serovar Hardjo-bovis (strain L550).